The following is a 298-amino-acid chain: Deoxyuridine 5'-triphosphate nucleotidohydrolase (298 aa).

Position 180–182 (180–182 (RSG)) interacts with substrate.

The protein belongs to the dUTPase family. The cofactor is Mg(2+).

The catalysed reaction is dUTP + H2O = dUMP + diphosphate + H(+). Its function is as follows. Involved in nucleotide metabolism: produces dUMP, the immediate precursor of thymidine nucleotides and decreases the intracellular concentration of dUTP to avoid uracil incorporation into viral DNA. This Alcelaphine herpesvirus 1 (strain C500) (AlHV-1) protein is Deoxyuridine 5'-triphosphate nucleotidohydrolase.